The sequence spans 300 residues: ADP-ribosyl cyclase/cyclic ADP-ribose hydrolase 1 (300 aa).

Topologically, residues 1-21 (MANCEFSPVSGDKPCCRLSRR) are cytoplasmic. Residues 22–42 (AQLCLGVSILVLILVVVLAVV) form a helical; Signal-anchor for type II membrane protein membrane-spanning segment. At 43–300 (VPRWRQQWSG…PEDSSCTSEI (258 aa)) the chain is on the extracellular side. 3 cysteine pairs are disulfide-bonded: Cys67/Cys82, Cys99/Cys180, and Cys160/Cys173. The N-linked (GlcNAc...) asparagine glycan is linked to Asn100. Cys119 is an active-site residue. The N-linked (GlcNAc...) asparagine glycan is linked to Asn164. Cys201 is an active-site residue. 2 N-linked (GlcNAc...) asparagine glycosylation sites follow: Asn209 and Asn219. 2 disulfides stabilise this stretch: Cys254-Cys275 and Cys287-Cys296.

This sequence belongs to the ADP-ribosyl cyclase family. Homodimer. In terms of tissue distribution, expressed at high levels in pancreas, liver, kidney, brain, testis, ovary, placenta, malignant lymphoma and neuroblastoma.

The protein localises to the cell surface. It is found in the membrane. The catalysed reaction is 2'-phospho-cyclic ADP-ribose + nicotinate = nicotinate-adenine dinucleotide phosphate. It carries out the reaction NAD(+) = cyclic ADP-beta-D-ribose + nicotinamide + H(+). It catalyses the reaction NAD(+) + H2O = ADP-D-ribose + nicotinamide + H(+). The enzyme catalyses cyclic ADP-beta-D-ribose + H2O = ADP-D-ribose. The catalysed reaction is NADP(+) = 2'-phospho-cyclic ADP-ribose + nicotinamide. It carries out the reaction nicotinate + NADP(+) = nicotinate-adenine dinucleotide phosphate + nicotinamide. ATP inhibits the cADPR hydrolyzing activity. In terms of biological role, synthesizes cyclic ADP-ribose (cADPR), a second messenger for glucose-induced insulin secretion. Synthesizes the Ca(2+) mobilizer nicotinate-adenine dinucleotide phosphate, NAADP(+), from 2'-phospho-cADPR and nicotinic acid, as well as from NADP(+) and nicotinic acid. At both pH 5.0 and pH 7.4 preferentially transforms 2'-phospho-cADPR into NAADP(+), while preferentially cleaving NADP(+) to cADPR and ADPRP rather than into NADDP(+). Has cADPR hydrolase activity. This is ADP-ribosyl cyclase/cyclic ADP-ribose hydrolase 1 (CD38) from Homo sapiens (Human).